The chain runs to 244 residues: MTQIIPALDLIDGEVVRLVKGDYKQKKVYKYNPLKKFKEYEKAGAKELHLVDLTGAKDPSKRQLVLIEKLAKEVSVNLQVGGGIRSKEEVKALLDCGVKRVVIGSMAIKDATLCLEILKKFGSEAIVLALDTILKEDYVVAVNAWQEASDKKLMEVLDFYSNKGLKHILCTDISKDGTMQGVNVRLYKLIHEIFPKICIQASGGVASLKDLENLKGICSGVIVGKALLDGVFSVEEGIRCLQNA.

Asp-9 acts as the Proton acceptor in catalysis. Asp-131 (proton donor) is an active-site residue.

The protein belongs to the HisA/HisF family.

It is found in the cytoplasm. It carries out the reaction 1-(5-phospho-beta-D-ribosyl)-5-[(5-phospho-beta-D-ribosylamino)methylideneamino]imidazole-4-carboxamide = 5-[(5-phospho-1-deoxy-D-ribulos-1-ylimino)methylamino]-1-(5-phospho-beta-D-ribosyl)imidazole-4-carboxamide. The protein operates within amino-acid biosynthesis; L-histidine biosynthesis; L-histidine from 5-phospho-alpha-D-ribose 1-diphosphate: step 4/9. The chain is 1-(5-phosphoribosyl)-5-[(5-phosphoribosylamino)methylideneamino] imidazole-4-carboxamide isomerase from Campylobacter jejuni subsp. doylei (strain ATCC BAA-1458 / RM4099 / 269.97).